The primary structure comprises 547 residues: MAAKEVKFGDSGRKKMLAGVNVLADAVKATLGPKGRNVIIEKSFGAPLITKDGVSVAKEIELKDRFENMGAQLVKDVASRANDDAGDGTTTATVLAQAIVNEGLKAVAAGMNPMDLKRGIDKATIAIVAELKKLSKPCTDTKAIAQVGTISANSDHSIGDIIAEAMEKVTKDGVITVEEGSGLENELSVVEGMQFDRGYLSPYFINKPDTMVAELDSPLLLLVDKKISNIREMLPVLEAVAKAGRPLLIVAEDVEGEALATLVVNNMRGIVKVAAVKAPGFGDRRKAMLQDIAVLTGGTVISEEIGLSLETTTLEHLGNAKRVILNKENTTIIDGAGVKTDIDSRISQIRQQIGDTSSDYDKEKLQERLAKLSGGVAVIKVGAGSEVEMKEKKARVEDALHATRAAVEEGVVPGGGVALVRSLQAIEGLKGDNADQDVGIALLRRAVEAPLRQIVANSGDEPSVVVDKVKQGSGNYGYNAASGEYGDMIEMGILDPAKVTRSALQAASSIASLMITTEAMIADVPEDKPAGGGMPDMGGMGGMGGMM.

ATP is bound by residues 30-33 (TLGP), Lys51, 87-91 (DGTTT), Gly415, 479-481 (NAA), and Asp495.

Belongs to the chaperonin (HSP60) family. As to quaternary structure, forms a cylinder of 14 subunits composed of two heptameric rings stacked back-to-back. Interacts with the co-chaperonin GroES.

It localises to the cytoplasm. It catalyses the reaction ATP + H2O + a folded polypeptide = ADP + phosphate + an unfolded polypeptide.. Functionally, together with its co-chaperonin GroES, plays an essential role in assisting protein folding. The GroEL-GroES system forms a nano-cage that allows encapsulation of the non-native substrate proteins and provides a physical environment optimized to promote and accelerate protein folding. The chain is Chaperonin GroEL from Pseudomonas syringae pv. syringae (strain B728a).